The following is a 222-amino-acid chain: 7-cyano-7-deazaguanine synthase (222 aa).

Residue 11 to 21 coordinates ATP; it reads LSGGMDSAVLL. Residues C192, C200, C203, and C206 each contribute to the Zn(2+) site.

This sequence belongs to the QueC family. Zn(2+) serves as cofactor.

The enzyme catalyses 7-carboxy-7-deazaguanine + NH4(+) + ATP = 7-cyano-7-deazaguanine + ADP + phosphate + H2O + H(+). Its pathway is purine metabolism; 7-cyano-7-deazaguanine biosynthesis. Catalyzes the ATP-dependent conversion of 7-carboxy-7-deazaguanine (CDG) to 7-cyano-7-deazaguanine (preQ(0)). The chain is 7-cyano-7-deazaguanine synthase from Sulfurihydrogenibium sp. (strain YO3AOP1).